Reading from the N-terminus, the 106-residue chain is Small ribosomal subunit protein uS10 (106 aa).

Belongs to the universal ribosomal protein uS10 family. In terms of assembly, part of the 30S ribosomal subunit.

Involved in the binding of tRNA to the ribosomes. The chain is Small ribosomal subunit protein uS10 from Prochlorococcus marinus (strain MIT 9211).